A 202-amino-acid polypeptide reads, in one-letter code: D-alanyl-D-alanine dipeptidase (202 aa).

The Zn(2+) site is built by H116 and D123. E181 (proton donor/acceptor) is an active-site residue. H184 is a binding site for Zn(2+).

Belongs to the peptidase M15D family. In terms of assembly, homodimer. Requires Zn(2+) as cofactor. Fe(2+) serves as cofactor. It depends on Co(2+) as a cofactor. The cofactor is Ni(2+).

The catalysed reaction is D-alanyl-D-alanine + H2O = 2 D-alanine. Its activity is regulated as follows. Inhibited by aminoalkyl phosphinate analogs. Catalyzes hydrolysis of the D-alanyl-D-alanine dipeptide. The sequence is that of D-alanyl-D-alanine dipeptidase (vanX) from Enterococcus faecium (Streptococcus faecium).